Consider the following 587-residue polypeptide: Putative ankyrin repeat protein L66 (587 aa).

ANK repeat units follow at residues 77-106 (DKNL…DIRI), 108-136 (NNYP…DVSD), 137-166 (YDNY…DVHC), 168-196 (DNAP…DVNY), 199-228 (NEDL…NIHF), 230-256 (DSLI…ILGN), 259-288 (NIRN…SIEN), 302-331 (FKKN…NVAF), 333-360 (DNLP…NVKI), 361-390 (NYEN…NVKD), 392-418 (TAIY…DLIK), 420-448 (HNEI…INKS), 449-478 (IYDK…DIKS), 480-507 (KFHD…KINN), 509-537 (YKNL…NMKC), and 539-567 (RIDT…KLIC).

The sequence is that of Putative ankyrin repeat protein L66 from Acanthamoeba polyphaga mimivirus (APMV).